A 137-amino-acid polypeptide reads, in one-letter code: Endoribonuclease YbeY (137 aa).

Histidine 105, histidine 109, and aspartate 115 together coordinate Zn(2+).

The protein belongs to the endoribonuclease YbeY family. Zn(2+) is required as a cofactor.

It is found in the cytoplasm. Single strand-specific metallo-endoribonuclease involved in late-stage 70S ribosome quality control and in maturation of the 3' terminus of the 16S rRNA. The protein is Endoribonuclease YbeY of Chlorobium luteolum (strain DSM 273 / BCRC 81028 / 2530) (Pelodictyon luteolum).